The chain runs to 740 residues: MTIAIRTTLDEPENHSDFVPHRPSRPEKTEPSKPFRLVSDYEPAGDQPQAISALCKDIQKGERDQVLLGVTGSGKTFTMAKVIEKLQRPSLILAPNKILAAQLYGEFKRFFPENAVEFFVSYYDYYQPEAYVPRTDTYIEKDSAINEAIDRMRHAATRSLLEREDVIIVASVSCLYGIGSVDTYSSMTFRLLKGQLVDQREIIRRLVALQYKRNEVAFGRGSFRVKGDTLEIFPSHYEDMAWRISFFGDEIEEISEFDPLTGVKIAKLDQIKIYANSHYVTPEPTLKAANNAIRRELDNRLREFKAEGKLLEAQRLEERTEFDLEMMAATGACSGIENYSRFLTGRAPGEPPPTLFEYLPDNALLFVDESHQTIPQINGMSRGDYRRKTTLADYGFRLPSCIDNRPLRFEEWNAMRPQTVYVSATPGPWELEQTGGVFVEQIIRPTGLVDPAIEVRPIEEQVDNLIFEAKKTAAAGWRSLVTTLTKRMAEDLTEYMYEAGLKVRYMHSDVETIERIELIRDLRLGVYDVLIGINLLREGLDIPECGLVAVLDADKEGFLRSETSLIQTIGRAARNAEGRVILYGDKITGSMARAMAETERRRIKQIAWNKAHNITPATVKRQVDDIVGHFGVVNSSEAAATIENHDPKVLARSISETEKEMLEAAANLEFEKAAQLRDVLHQLKRQELGLPPEKSSEIQGRSEAGRPGTRKTRSDKAREAKASKRVKQEAGEKLLRSRGH.

Positions 1 to 36 (MTIAIRTTLDEPENHSDFVPHRPSRPEKTEPSKPFR) are disordered. The segment covering 8 to 33 (TLDEPENHSDFVPHRPSRPEKTEPSK) has biased composition (basic and acidic residues). The Helicase ATP-binding domain occupies 56–444 (KDIQKGERDQ…GGVFVEQIIR (389 aa)). 69–76 (GVTGSGKT) serves as a coordination point for ATP. The Beta-hairpin motif lies at 122-145 (YYDYYQPEAYVPRTDTYIEKDSAI). In terms of domain architecture, Helicase C-terminal spans 461–627 (QVDNLIFEAK…TVKRQVDDIV (167 aa)). A UVR domain is found at 651–686 (ARSISETEKEMLEAAANLEFEKAAQLRDVLHQLKRQ). Positions 687–740 (ELGLPPEKSSEIQGRSEAGRPGTRKTRSDKAREAKASKRVKQEAGEKLLRSRGH) are disordered. The segment covering 712-740 (TRSDKAREAKASKRVKQEAGEKLLRSRGH) has biased composition (basic and acidic residues).

The protein belongs to the UvrB family. Forms a heterotetramer with UvrA during the search for lesions. Interacts with UvrC in an incision complex.

The protein resides in the cytoplasm. The UvrABC repair system catalyzes the recognition and processing of DNA lesions. A damage recognition complex composed of 2 UvrA and 2 UvrB subunits scans DNA for abnormalities. Upon binding of the UvrA(2)B(2) complex to a putative damaged site, the DNA wraps around one UvrB monomer. DNA wrap is dependent on ATP binding by UvrB and probably causes local melting of the DNA helix, facilitating insertion of UvrB beta-hairpin between the DNA strands. Then UvrB probes one DNA strand for the presence of a lesion. If a lesion is found the UvrA subunits dissociate and the UvrB-DNA preincision complex is formed. This complex is subsequently bound by UvrC and the second UvrB is released. If no lesion is found, the DNA wraps around the other UvrB subunit that will check the other stand for damage. This is UvrABC system protein B from Zymomonas mobilis subsp. mobilis (strain ATCC 31821 / ZM4 / CP4).